Reading from the N-terminus, the 428-residue chain is Enolase (428 aa).

Gln162 contributes to the (2R)-2-phosphoglycerate binding site. The active-site Proton donor is Glu204. The Mg(2+) site is built by Asp241, Glu283, and Asp310. 4 residues coordinate (2R)-2-phosphoglycerate: Lys335, Arg364, Ser365, and Lys386. Catalysis depends on Lys335, which acts as the Proton acceptor.

The protein belongs to the enolase family. The cofactor is Mg(2+).

The protein resides in the cytoplasm. Its subcellular location is the secreted. The protein localises to the cell surface. It carries out the reaction (2R)-2-phosphoglycerate = phosphoenolpyruvate + H2O. Its pathway is carbohydrate degradation; glycolysis; pyruvate from D-glyceraldehyde 3-phosphate: step 4/5. Functionally, catalyzes the reversible conversion of 2-phosphoglycerate (2-PG) into phosphoenolpyruvate (PEP). It is essential for the degradation of carbohydrates via glycolysis. The sequence is that of Enolase from Rhodococcus opacus (strain B4).